Reading from the N-terminus, the 458-residue chain is ATP synthase subunit beta 2 (458 aa).

148-155 (GGAGVGKT) is a binding site for ATP.

This sequence belongs to the ATPase alpha/beta chains family. In terms of assembly, F-type ATPases have 2 components, CF(1) - the catalytic core - and CF(0) - the membrane proton channel. CF(1) has five subunits: alpha(3), beta(3), gamma(1), delta(1), epsilon(1). CF(0) has three main subunits: a(1), b(2) and c(9-12). The alpha and beta chains form an alternating ring which encloses part of the gamma chain. CF(1) is attached to CF(0) by a central stalk formed by the gamma and epsilon chains, while a peripheral stalk is formed by the delta and b chains.

Its subcellular location is the cell inner membrane. It carries out the reaction ATP + H2O + 4 H(+)(in) = ADP + phosphate + 5 H(+)(out). In terms of biological role, produces ATP from ADP in the presence of a proton gradient across the membrane. The catalytic sites are hosted primarily by the beta subunits. This Marinomonas sp. (strain MWYL1) protein is ATP synthase subunit beta 2.